A 274-amino-acid polypeptide reads, in one-letter code: Tryptophan synthase alpha chain (274 aa).

Residues Glu49 and Asp60 each act as proton acceptor in the active site.

This sequence belongs to the TrpA family. As to quaternary structure, tetramer of two alpha and two beta chains.

The catalysed reaction is (1S,2R)-1-C-(indol-3-yl)glycerol 3-phosphate + L-serine = D-glyceraldehyde 3-phosphate + L-tryptophan + H2O. It participates in amino-acid biosynthesis; L-tryptophan biosynthesis; L-tryptophan from chorismate: step 5/5. Functionally, the alpha subunit is responsible for the aldol cleavage of indoleglycerol phosphate to indole and glyceraldehyde 3-phosphate. This Gluconacetobacter diazotrophicus (strain ATCC 49037 / DSM 5601 / CCUG 37298 / CIP 103539 / LMG 7603 / PAl5) protein is Tryptophan synthase alpha chain.